Consider the following 161-residue polypeptide: Globin CTT-VIIB-3 (161 aa).

Positions 1–16 are cleaved as a signal peptide; the sequence is MKFFAVLALCIVGAIA. The region spanning 18–161 is the Globin domain; it reads PLTADEASLV…NTYAIVVPRL (144 aa). Positions 76 and 111 each coordinate heme b.

The protein belongs to the globin family. In terms of assembly, homodimer.

This Chironomus thummi thummi (Midge) protein is Globin CTT-VIIB-3 (CTT-7B3).